The primary structure comprises 620 residues: Glutathione-regulated potassium-efflux system protein KefC (620 aa).

12 helical membrane-spanning segments follow: residues histidine 4–valine 24, leucine 26–leucine 46, serine 54–leucine 74, glycine 90–leucine 110, valine 114–methionine 134, phenylalanine 149–leucine 169, leucine 178–leucine 198, valine 218–glycine 238, glycine 270–valine 290, leucine 294–valine 314, tryptophan 327–glutamine 347, and alanine 359–threonine 379. Positions glutamine 399–threonine 518 constitute an RCK N-terminal domain. The interval glutamine 599–isoleucine 620 is disordered.

It belongs to the monovalent cation:proton antiporter 2 (CPA2) transporter (TC 2.A.37) family. KefC subfamily. As to quaternary structure, homodimer. Interacts with the regulatory subunit KefF.

It localises to the cell inner membrane. Pore-forming subunit of a potassium efflux system that confers protection against electrophiles. Catalyzes K(+)/H(+) antiport. This is Glutathione-regulated potassium-efflux system protein KefC from Salmonella schwarzengrund (strain CVM19633).